We begin with the raw amino-acid sequence, 39 residues long: Pro-opiomelanocortin (39 aa).

Val13 bears the Valine amide mark.

Belongs to the POMC family.

It is found in the secreted. In terms of biological role, precursor protein for pituitary hormones that regulate stress and environmental adaptation. Its function is as follows. Stimulates the adrenal glands to release cortisol. Anorexigenic peptide. Increases the pigmentation of skin by increasing melanin production in melanocytes. In Struthio camelus (Common ostrich), this protein is Pro-opiomelanocortin (POMC).